The sequence spans 548 residues: Calcium-transporting ATPase (548 aa).

A signal peptide spans 1–21; sequence MNFKSTVITAMCCFFSFAVLA. A divalent metal cation is bound by residues Asp37 and Thr78. Thr78 (phosphothreonine intermediate) is an active-site residue. Substrate-binding positions include Asn99 and 160–162; that span reads KDR. The ATP-binding motif lies at 179–187; sequence DGKTGDWIT. Positions 305, 309, 352, 353, and 488 each coordinate a divalent metal cation.

Requires Mg(2+) as cofactor.

It is found in the cell inner membrane. It catalyses the reaction Ca(2+)(in) + ATP + H2O = Ca(2+)(out) + ADP + phosphate + H(+). Its activity is regulated as follows. Completely inhibited by vanadate(3-). Also inhibited by lanthanoid atom and phosphate. Not inhibited by N-ethylmaleimide, 1,3-dicyclohexylcarbodiimide, oligomycin, ouabain, valinomycin, nigericin, thapsigargin, cyclopiazonic acid or fluorescein isothiocyanate. Catalyzes the hydrolysis of ATP coupled with the transport of calcium. Has some hydrolysis activity also with dATP, GTP, UTP, ITP and 4-nitrophenyl phosphate as substrate. No activity with ADP, CTP, acetyl dihydrogen phosphate or AMP-PNP as substrate. In Myroides odoratus (Flavobacterium odoratum), this protein is Calcium-transporting ATPase.